The following is a 1121-amino-acid chain: CRISPR-associated endonuclease Cas9 1 (1121 aa).

The active-site For RuvC-like nuclease domain is Asp-9. The Mg(2+) site is built by Asp-9, Glu-509, and Glu-513. The HNH Cas9-type domain occupies 516–684 (EDDEKKAIQK…VRKKFIERNL (169 aa)). His-599 functions as the Proton acceptor for HNH nuclease domain in the catalytic mechanism. His-738 provides a ligand contact to Mg(2+).

Belongs to the CRISPR-associated protein Cas9 family. Subtype II-A subfamily. As to quaternary structure, monomer. Binds crRNA and tracrRNA. Mg(2+) serves as cofactor.

CRISPR (clustered regularly interspaced short palindromic repeat) is an adaptive immune system that provides protection against mobile genetic elements (viruses, transposable elements and conjugative plasmids). CRISPR clusters contain spacers, sequences complementary to antecedent mobile elements, and target invading nucleic acids. CRISPR clusters are transcribed and processed into CRISPR RNA (crRNA). In type II CRISPR systems correct processing of pre-crRNA requires a trans-encoded small RNA (tracrRNA), endogenous ribonuclease 3 (rnc) and this protein. The tracrRNA serves as a guide for ribonuclease 3-aided processing of pre-crRNA. Subsequently Cas9/crRNA/tracrRNA endonucleolytically cleaves linear or circular dsDNA target complementary to the spacer; Cas9 is inactive in the absence of the 2 guide RNAs (gRNA). Cas9 recognizes the protospacer adjacent motif (PAM) in the CRISPR repeat sequences to help distinguish self versus nonself, as targets within the bacterial CRISPR locus do not have PAMs. PAM recognition is also required for catalytic activity. Cuts target DNA when Cas9 and gRNAs are mixed. The protein is CRISPR-associated endonuclease Cas9 1 of Streptococcus thermophilus (strain ATCC BAA-491 / LMD-9).